A 137-amino-acid polypeptide reads, in one-letter code: Pro-corazonin (137 aa).

The signal sequence occupies residues 1–20 (MKHVFSTSLIVSLFVIFTDA). Position 21 is a pyrrolidone carboxylic acid (Q21). Position 31 is an asparagine amide (N31). Positions 68–137 (FLKSPCDVRL…RLLNDGMHRL (70 aa)) are excised as a propeptide.

It belongs to the corazonin family.

It is found in the secreted. Its function is as follows. Cardioactive peptide. Corazonin is probably involved in the physiological regulation of the heart beat. In Aedes aegypti (Yellowfever mosquito), this protein is Pro-corazonin.